A 214-amino-acid polypeptide reads, in one-letter code: Putative AgrB-like protein (214 aa).

Helical transmembrane passes span 41–61, 82–102, 109–129, 154–174, and 182–202; these read IISVFIIGLLFNIALEALIFL, CTLLGIIISICIGFLVKSSFF, IIVFIGIVIFVFGYFIVFKFA, ILTIYLFIEILSIILYYNLGW, and LSIILGVAWQCITLTYIGNIL.

It belongs to the AgrB family.

It localises to the cell membrane. Its function is as follows. May be involved in the proteolytic processing of a quorum sensing system signal molecule precursor. The protein is Putative AgrB-like protein of Clostridium perfringens (strain SM101 / Type A).